The following is a 291-amino-acid chain: Ribosomal RNA small subunit methyltransferase A (291 aa).

The S-adenosyl-L-methionine site is built by Asn-33, Val-35, Gly-60, Glu-81, Asp-111, and Asn-129.

It belongs to the class I-like SAM-binding methyltransferase superfamily. rRNA adenine N(6)-methyltransferase family. RsmA subfamily.

The protein resides in the cytoplasm. It catalyses the reaction adenosine(1518)/adenosine(1519) in 16S rRNA + 4 S-adenosyl-L-methionine = N(6)-dimethyladenosine(1518)/N(6)-dimethyladenosine(1519) in 16S rRNA + 4 S-adenosyl-L-homocysteine + 4 H(+). In terms of biological role, specifically dimethylates two adjacent adenosines (A1518 and A1519) in the loop of a conserved hairpin near the 3'-end of 16S rRNA in the 30S particle. May play a critical role in biogenesis of 30S subunits. This is Ribosomal RNA small subunit methyltransferase A from Streptomyces griseus subsp. griseus (strain JCM 4626 / CBS 651.72 / NBRC 13350 / KCC S-0626 / ISP 5235).